The primary structure comprises 116 residues: MKGTSMGVAILAMIVMAQLMVHPSVAITCNDVTGNLTPCLPYLRSGGKPTPACCAGAKKLLGATRTQADRRTACKCAKTAAPQLKVRPDMASSLPGKCGISTSIPINPNVNCNTIP.

The N-terminal stretch at 1–26 (MKGTSMGVAILAMIVMAQLMVHPSVA) is a signal peptide. Cystine bridges form between C29-C76, C39-C53, C54-C98, and C74-C112.

The protein belongs to the plant LTP family. In terms of tissue distribution, in germinating seeds, detected in the entire surface of the cotyledons, shoot meristem, inter-cotyledon space, primary xylem and immature vascular elements (at protein level). Expressed in seeds, but not the aerial parts of the plant.

It is found in the secreted. It localises to the extracellular space. Its subcellular location is the membrane. Plant non-specific lipid-transfer proteins transfer phospholipids as well as galactolipids across membranes. May play a role in wax or cutin deposition in the cell walls of expanding epidermal cells and certain secretory tissues. Permeabilizes the membrane of fungal spores, inhibits germination of the spores of the fungus F.solani at a concentration of 40 ug/ml. Inhibits the growth of F.solani with an IC(50) of 6.5 ug/ml, weakly inhibits the growth of the fungus A.alternata. Binds oleoyl-CoA. This chain is Non-specific lipid-transfer protein AP10, found in Helianthus annuus (Common sunflower).